A 114-amino-acid chain; its full sequence is Tyrosine-protein phosphatase 27 (114 aa).

A Tyrosine-protein phosphatase domain is found at 1–114 (WQMIVEHKCC…ELGNDNPIVV (114 aa)). A substrate-binding site is contributed by Asp82.

This sequence belongs to the protein-tyrosine phosphatase family.

It catalyses the reaction O-phospho-L-tyrosyl-[protein] + H2O = L-tyrosyl-[protein] + phosphate. This chain is Tyrosine-protein phosphatase 27 (STY-27), found in Styela plicata (Wrinkled sea squirt).